The following is a 236-amino-acid chain: MTKRYWNIDLEEMMKAGVHFGHGTRKWNPKMAPYISAKRKGIHIINLTRTARFLSEACDLVFDAASRGKQFLIVGTKNKAADLVAWAAIRARCHYVNKKWLGGMLTNWSTTETRLHKFRDLRTEQKTGRLRRLPKRDAAVLKRQLSHLQTYLGGIKYMTGLPDIVIIIDQHEEYTALQECITLGIPTISLIDTNCDPDLADISIPANDDAISSIRLILNKLVFAIREGRSSYIRNP.

Belongs to the universal ribosomal protein uS2 family.

The protein resides in the plastid. It is found in the chloroplast. This Daucus carota (Wild carrot) protein is Small ribosomal subunit protein uS2c (rps2).